Here is a 383-residue protein sequence, read N- to C-terminus: Delta(12)-fatty-acid desaturase (383 aa).

Positions 1–24 (MGAGGRMPVPTSSKKSETDTTKRV) are disordered. Residues 14 to 24 (KKSETDTTKRV) show a composition bias toward basic and acidic residues. A helical transmembrane segment spans residues 56 to 76 (LISDIIIASCFYYVATNYFSL). The short motif at 105–109 (HECGH) is the Histidine box-1 element. A helical membrane pass occupies residues 117–137 (WLDDTVGLIFHSFLLVPYFSW). The Histidine box-2 signature appears at 141 to 145 (HRRHH). 3 helical membrane-spanning segments follow: residues 179 to 199 (IMML…FNVS), 225 to 245 (IYLS…YAAA), and 252 to 272 (ICLY…ITYL). The short motif at 315–319 (HVAHH) is the Histidine box-3 element.

The protein belongs to the fatty acid desaturase type 1 family. In terms of assembly, homo- and heterodimer. Interacts with FAD3 but not with FAD6. FAD2-FAD3 heterodimers can form a metabolic channel in which 18:1-PC is converted to 18:3-PC without releasing a free 18:2-PC intermediate. In terms of tissue distribution, expressed in shoots and roots. Expressed in leaves, stems, flowers and siliques.

The protein localises to the endoplasmic reticulum membrane. It localises to the microsome membrane. It carries out the reaction (9Z)-octadecenoyl-CoA + 2 Fe(II)-[cytochrome b5] + O2 + 2 H(+) = (9Z,12Z)-octadecadienoyl-CoA + 2 Fe(III)-[cytochrome b5] + 2 H2O. The catalysed reaction is (9Z)-hexadecenoyl-CoA + 2 Fe(II)-[cytochrome b5] + O2 + 2 H(+) = (9Z,12Z)-hexadecadienoyl-CoA + 2 Fe(III)-[cytochrome b5] + 2 H2O. The enzyme catalyses a (9Z)-octadecenoyl-containing glycerolipid + 2 Fe(II)-[cytochrome b5] + O2 + 2 H(+) = a (9Z,12Z)-octadecadienoyl-containing glycerolipid + 2 Fe(III)-[cytochrome b5] + 2 H2O. It catalyses the reaction (9Z)-octadecenoyl-CoA + AH2 + O2 = (9Z,12Z)-octadecadienoyl-CoA + A + 2 H2O. It carries out the reaction (9Z)-hexadecenoyl-CoA + AH2 + O2 = (9Z,12Z)-hexadecadienoyl-CoA + A + 2 H2O. The catalysed reaction is (9Z)-tetradecenoyl-CoA + 2 Fe(II)-[cytochrome b5] + O2 + 2 H(+) = (9Z,12Z)-tetradecadienoyl-CoA + 2 Fe(III)-[cytochrome b5] + 2 H2O. The enzyme catalyses (9Z)-pentadecenoyl-CoA + 2 Fe(II)-[cytochrome b5] + O2 + 2 H(+) = (9Z,12Z)-pentadecadienoyl-CoA + 2 Fe(III)-[cytochrome b5] + 2 H2O. It catalyses the reaction (9Z)-heptadecenoyl-CoA + 2 Fe(II)-[cytochrome b5] + O2 + 2 H(+) = (9Z,12Z)-heptadecadienoyl-CoA + 2 Fe(III)-[cytochrome b5] + 2 H2O. The protein operates within lipid metabolism; polyunsaturated fatty acid biosynthesis. Its function is as follows. ER (microsomal) omega-6 fatty acid desaturase introduces the second double bond in the biosynthesis of 18:3 fatty acids, important constituents of plant membranes. Delta(12)-desaturase with regioselectivity determined by the double bond (delta(9) position) and carboxyl group of the substrate. Can use both 16:1 and 18:1 fatty acids as substrates. It is thought to use cytochrome b5 as an electron donor and to act on fatty acids esterified to phosphatidylcholine (PC) and, possibly, other phospholipids. Very low constitutive hydroxylation activity. Required for desaturation of fatty acids present in extraplastidial membranes, including mitochondria. Required for salt tolerance during seed germination and early seedling growth. This Arabidopsis thaliana (Mouse-ear cress) protein is Delta(12)-fatty-acid desaturase.